The following is a 77-amino-acid chain: Acyl carrier protein (77 aa).

A Carrier domain is found at 1-76 (MAIFDDVKKV…DVVNYIENLQ (76 aa)). Serine 36 bears the O-(pantetheine 4'-phosphoryl)serine mark.

The protein belongs to the acyl carrier protein (ACP) family. Post-translationally, 4'-phosphopantetheine is transferred from CoA to a specific serine of apo-ACP by AcpS. This modification is essential for activity because fatty acids are bound in thioester linkage to the sulfhydryl of the prosthetic group.

The protein resides in the cytoplasm. The protein operates within lipid metabolism; fatty acid biosynthesis. In terms of biological role, carrier of the growing fatty acid chain in fatty acid biosynthesis. The chain is Acyl carrier protein from Campylobacter lari (strain RM2100 / D67 / ATCC BAA-1060).